Reading from the N-terminus, the 966-residue chain is MSETNPAATAPVSADAAPHRYTAAMAAEIEARWQDFWDAEGTYAAPNPKGDLAGDPELVAKPKKFIMDMFPYPSGAGLHVGHPLGYIATDVFARFQRMTGHNVLHTLGFDAFGLPAEQYAVQTGTHPRVSTEANMKNMQSQLRRLGLGHDRRRSFATIDPEYYKWTQWIFLQIFNSWYDDEAKKARPIAELVAQFASGEREVPGHAGRAWSSLSEAERADVLGEYRLAYASDAPVNWCPGLGTVLANEEVTADGRSERGNFPVFKSKLRQWNMRITAYADRLLDDLDQLDWPEAIKLQQRNWIGRSEGARVDFPVDGERITVFTTRPDTLFGATYMVLAPEHPLVEKFTPAVWPEGTRDAWTGGHATPTEAVAAYRAQAASKSDVERQAEAKDKTGVFIGAYATNPVNGEQVPVFVADYVLMGYGTGAIMAVPAHDSRDFEFARAFELPVRCVVEPTDGRGTDTSTWDEAFASYDAKIVNSSGTDVSLDGLGVVEAKERVTEWLERAGAGAGTVNFRLRDWLFSRQRYWGEPFPIVYDEDGIAHPLPDSMLPLELPEVEDYSPRTFDPDDADTKPETPLSRNEDWVHVTLDLGDGRGPRKYRRETNTMPNWAGSCWYELRYLDPHNGERLVDPEIEQYWMGPREGLPHGGVDLYVGGAEHAVLHLLYARFWSKVLFDLGHVSSAEPFHKLFNQGMIQAYVYRDSRGIAVPAAEVEERDGAYYYQGEKVSRLLGKMGKSLKNAVTPDEICAEYGADTLRLYEMAMGPLDVSRPWDTRAVVGQFRLLQRLWRNVVDEDTGELSVADVAESDIDAGTLRALHKAVDGVRQDLEGMRFNTAIAKVTELNNHLTKAGGPVPRSVAERLVLLVAPLAPHVAEELWRKLGHESSVVHEDFPVADPAYVVDETVTCVVQIKGKVKARLEVAPSISEDDLEKAALADEKVVAALGGAGIRKVIVRAPKLVNIVPA.

Residues 71 to 82 carry the 'HIGH' region motif; that stretch reads PYPSGAGLHVGH. The segment at 561 to 580 is disordered; sequence YSPRTFDPDDADTKPETPLS. Basic and acidic residues predominate over residues 571–580; sequence ADTKPETPLS. The 'KMSKS' region motif lies at 734–738; that stretch reads KMGKS. Lysine 737 contributes to the ATP binding site.

It belongs to the class-I aminoacyl-tRNA synthetase family.

It localises to the cytoplasm. The enzyme catalyses tRNA(Leu) + L-leucine + ATP = L-leucyl-tRNA(Leu) + AMP + diphosphate. The sequence is that of Leucine--tRNA ligase from Streptomyces coelicolor (strain ATCC BAA-471 / A3(2) / M145).